A 1138-amino-acid chain; its full sequence is Protein RECOGNITION OF PERONOSPORA PARASITICA 7 (1138 aa).

An NB-ARC domain is found at Glu-166 to Glu-422. Gly-189–Thr-196 lines the ATP pocket. LRR repeat units lie at residues Gln-544–Val-565, Val-566–Leu-581, Glu-582–Leu-606, Ile-607–Leu-631, Met-655–Lys-680, Leu-681–Thr-705, Thr-707–Leu-726, Lys-727–Phe-752, His-754–Pro-774, Ser-775–Lys-797, Leu-798–Gln-825, Met-847–Ser-871, Leu-873–Leu-893, Val-894–Gln-918, Met-940–Gln-963, Leu-1028–Cys-1050, Phe-1055–Met-1078, Pro-1079–Tyr-1103, and Lys-1115–Asp-1138.

The protein belongs to the disease resistance NB-LRR family.

In terms of biological role, disease resistance protein required for incompatible interactions with avirulent strains of Hyaloperonospora arabidopsidis (downy mildew), isolate Hpa-Hiks1 in cv. Columbia. This Arabidopsis thaliana (Mouse-ear cress) protein is Protein RECOGNITION OF PERONOSPORA PARASITICA 7.